A 296-amino-acid chain; its full sequence is ATP synthase gamma chain (296 aa).

Belongs to the ATPase gamma chain family. As to quaternary structure, F-type ATPases have 2 components, CF(1) - the catalytic core - and CF(0) - the membrane proton channel. CF(1) has five subunits: alpha(3), beta(3), gamma(1), delta(1), epsilon(1). CF(0) has three main subunits: a, b and c.

It is found in the cell inner membrane. In terms of biological role, produces ATP from ADP in the presence of a proton gradient across the membrane. The gamma chain is believed to be important in regulating ATPase activity and the flow of protons through the CF(0) complex. This Rhodopirellula baltica (strain DSM 10527 / NCIMB 13988 / SH1) protein is ATP synthase gamma chain.